We begin with the raw amino-acid sequence, 238 residues long: Ribosomal RNA small subunit methyltransferase I (238 aa).

Belongs to the methyltransferase superfamily. RsmI family.

It localises to the cytoplasm. The enzyme catalyses cytidine(1402) in 16S rRNA + S-adenosyl-L-methionine = 2'-O-methylcytidine(1402) in 16S rRNA + S-adenosyl-L-homocysteine + H(+). Functionally, catalyzes the 2'-O-methylation of the ribose of cytidine 1402 (C1402) in 16S rRNA. In Mesomycoplasma conjunctivae (strain ATCC 25834 / NCTC 10147 / HRC/581) (Mycoplasma conjunctivae), this protein is Ribosomal RNA small subunit methyltransferase I.